A 192-amino-acid polypeptide reads, in one-letter code: UPF0312 protein PFLU_5725 (192 aa).

The signal sequence occupies residues 1–23; that stretch reads MLKKTLAALAIGTALLSAGQVMA.

It belongs to the UPF0312 family. Type 1 subfamily.

It is found in the periplasm. The protein is UPF0312 protein PFLU_5725 of Pseudomonas fluorescens (strain SBW25).